Here is a 194-residue protein sequence, read N- to C-terminus: Cytochrome c biogenesis ATP-binding export protein CcmA (194 aa).

The 190-residue stretch at 5–194 (LALDGVACIR…LDELVMGVLA (190 aa)) folds into the ABC transporter domain. 37-44 (GPNGAGKS) contacts ATP.

This sequence belongs to the ABC transporter superfamily. CcmA exporter (TC 3.A.1.107) family. As to quaternary structure, the complex is composed of two ATP-binding proteins (CcmA) and two transmembrane proteins (CcmB).

It localises to the cell inner membrane. It carries out the reaction heme b(in) + ATP + H2O = heme b(out) + ADP + phosphate + H(+). Part of the ABC transporter complex CcmAB involved in the biogenesis of c-type cytochromes; once thought to export heme, this seems not to be the case, but its exact role is uncertain. Responsible for energy coupling to the transport system. The polypeptide is Cytochrome c biogenesis ATP-binding export protein CcmA (Sphingopyxis alaskensis (strain DSM 13593 / LMG 18877 / RB2256) (Sphingomonas alaskensis)).